Reading from the N-terminus, the 98-residue chain is DNA-directed RNA polymerase subunit omega (98 aa).

The protein belongs to the RNA polymerase subunit omega family. In terms of assembly, the RNAP catalytic core consists of 2 alpha, 1 beta, 1 beta' and 1 omega subunit. When a sigma factor is associated with the core the holoenzyme is formed, which can initiate transcription.

The catalysed reaction is RNA(n) + a ribonucleoside 5'-triphosphate = RNA(n+1) + diphosphate. Its function is as follows. Promotes RNA polymerase assembly. Latches the N- and C-terminal regions of the beta' subunit thereby facilitating its interaction with the beta and alpha subunits. The polypeptide is DNA-directed RNA polymerase subunit omega (Tropheryma whipplei (strain Twist) (Whipple's bacillus)).